We begin with the raw amino-acid sequence, 555 residues long: Xylulose kinase (555 aa).

Substrate-binding residues include histidine 88, arginine 158, aspartate 274, and asparagine 275. Residues tryptophan 357, 455-456 (GA), and asparagine 459 each bind ATP.

It belongs to the FGGY kinase family.

It localises to the cytoplasm. It catalyses the reaction D-xylulose + ATP = D-xylulose 5-phosphate + ADP + H(+). This Schizosaccharomyces pombe (strain 972 / ATCC 24843) (Fission yeast) protein is Xylulose kinase.